A 329-amino-acid chain; its full sequence is ATP phosphoribosyltransferase regulatory subunit (329 aa).

The protein belongs to the class-II aminoacyl-tRNA synthetase family. HisZ subfamily. Heteromultimer composed of HisG and HisZ subunits.

It localises to the cytoplasm. Its pathway is amino-acid biosynthesis; L-histidine biosynthesis; L-histidine from 5-phospho-alpha-D-ribose 1-diphosphate: step 1/9. Required for the first step of histidine biosynthesis. May allow the feedback regulation of ATP phosphoribosyltransferase activity by histidine. The protein is ATP phosphoribosyltransferase regulatory subunit of Streptococcus gordonii (strain Challis / ATCC 35105 / BCRC 15272 / CH1 / DL1 / V288).